The following is a 1001-amino-acid chain: MIQSSLYRALNKGFDYQILACKDFKESELAKEVISYFKPNIKAVLFPELRAKKNDDLRSFFEEFLQLLGGLREFYQALENKQETIIIAPISALLHPLPKKELLESFKITLLEKYNLKDLKDKLFYYGYEILDLVEVEGEASFRGDIVDIYIPNSKAYRLSFFDAECESIKELDPATQMSLKEDLLEIEIPPTLFSLDEPSYKDLKTKVEQSPLNSFSKDLTSFGLWFLGEKANDLLGVYQSIISPRALEEIQELASLNELDDERFKFLKVLENAQGYEDLEIHVHALEGFIALHSNRKITLLAPNKTILDNSISVLDAGNMECVIAPFVLNFKTPDRIFISLNSFERKKKRQKSKLALNELNAGEWVVHDDYGVGVFSQLIQHSVLGSKRDFLEIAYLGEDKLLLPVENLHLIARYVVQSDSVPVKDRLGKGSFLKLKAKVRAKLLEIAGKIIELAAERNLILGKKMDTHLAELEIFKSHAGFEYTSDQEKAIAEISRDLSSHRVMDRLLSGDVGFGKTEVAMHAIFCAFLNGFQSALVVPTTLLAHQHFETLKARFENFGVKVARLDRYIKTSEKSKLLKAVELGLVDVLIGTHAILGTKFKNLGLMVVDEEHKFGVKQKEALKELSKSVHFLSMSATPIPRTLNMALSQIKGISSLKTPPTDRKPSRTFLKEKNDELLKEIIYRELRRNGQIFYIHNHIASISKVKTKLEDLIPKLKIAILHSQINANESEEIMLEFAKGNYQVLLCTSIVESGIHLPNANTIIIDNAQNFGLADLHQLRGRVGRGKKEGFCYFLIEDQKSLNEQALKRLLALEKNSYLGSGESIAYHDLEIRGGGNLLGQDQSGHIKNIGYALYTRMLEDAIYELSGGKKRLEKSVEIQLGVSAFLNPELIASDSLRLDLYRRLSLCENVDEVGQIHEEIEDRFGKMDDLSAQFLQIITLKILANQLGILKLSNFNQNITLTYSDEKKESLKAPSKDDNDILETLLKHLHAQISLKRR.

Residues 499–658 (DLSSHRVMDR…LSQIKGISSL (160 aa)) form the Helicase ATP-binding domain. 512–519 (GDVGFGKT) contacts ATP. Residues 611-614 (DEEH) carry the DEEH box motif. One can recognise a Helicase C-terminal domain in the interval 679–835 (LLKEIIYREL…SIAYHDLEIR (157 aa)).

This sequence in the N-terminal section; belongs to the UvrB family. The protein in the C-terminal section; belongs to the helicase family. RecG subfamily.

It is found in the cytoplasm. Couples transcription and DNA repair by recognizing RNA polymerase (RNAP) stalled at DNA lesions. Mediates ATP-dependent release of RNAP and its truncated transcript from the DNA, and recruitment of nucleotide excision repair machinery to the damaged site. The protein is Transcription-repair-coupling factor of Helicobacter pylori (strain J99 / ATCC 700824) (Campylobacter pylori J99).